The chain runs to 484 residues: Diaminopimelate decarboxylase 1, chloroplastic (484 aa).

The segment covering 1–28 has biased composition (polar residues); it reads MAAATQFLSQPSSLNPHQLKNQTSQRSR. The disordered stretch occupies residues 1-30; sequence MAAATQFLSQPSSLNPHQLKNQTSQRSRSI. Residues 1–49 constitute a chloroplast transit peptide; the sequence is MAAATQFLSQPSSLNPHQLKNQTSQRSRSIPVLSLKSTLKPLKRLSVKA. N-acetylalanine is present on Ala-50. Position 125 is an N6-(pyridoxal phosphate)lysine (Lys-125). Pyridoxal 5'-phosphate is bound by residues Gly-304 and 340–343; that span reads EPGR. Residues Arg-343, Arg-379, and Tyr-383 each contribute to the substrate site. The active-site Proton donor is Cys-411. The substrate site is built by Glu-412 and Tyr-440. Tyr-440 lines the pyridoxal 5'-phosphate pocket.

It belongs to the Orn/Lys/Arg decarboxylase class-II family. LysA subfamily. In terms of assembly, homodimer. Requires pyridoxal 5'-phosphate as cofactor.

The protein resides in the plastid. It localises to the chloroplast. It catalyses the reaction meso-2,6-diaminopimelate + H(+) = L-lysine + CO2. It functions in the pathway amino-acid biosynthesis; L-lysine biosynthesis via DAP pathway; L-lysine from DL-2,6-diaminopimelate: step 1/1. In terms of biological role, specifically catalyzes the decarboxylation of meso-diaminopimelate (meso-DAP) to L-lysine. This chain is Diaminopimelate decarboxylase 1, chloroplastic (LYSA1), found in Arabidopsis thaliana (Mouse-ear cress).